Here is a 413-residue protein sequence, read N- to C-terminus: MPSSISWGLLLLAALSCLGPGSLAQDAQETEASKQDQEHPASHRIAPHLAEFALSLYRVLARQSNTTNIFFSPVSIASALAMLSLGTKGDTHTQILEGLDFNLTEMAEADIHQGFQNLLQTLNRPNTQLQLTSGNVLFIHQNLKLLDKFLENIKSLYHSGAFPTNFTNTEEARQQINSYVEQGTQGKIVELVKELDRDTVLALVNYIFFKGKWLKPFNVKNIREEDFHVDEATTVRVPMMYRVGMFPVHYCRTLASLVLQMDYLGNATAIFLLPDKGKMQHLEDTISTEILSKLLKDRQTSKYQVYFPRVSISGTYDLKDVLSSLGITRVFSRVADLSGVTEDAPLTVSKVLHKAVLDMDEEGTEAAGGTVLGAEAMLQAPIMKFDRPFLVVIYEHNTKSPLFVGKVVNPTQQ.

A signal peptide spans 1–24 (MPSSISWGLLLLAALSCLGPGSLA). Q25 carries the pyrrolidone carboxylic acid modification. N-linked (GlcNAc...) asparagine glycosylation is found at N65, N102, N165, and N266. The segment at 368-387 (GGTVLGAEAMLQAPIMKFDR) is RCL.

Belongs to the serpin family. Plasma proteins HP-20, HP-25, HP-27 and HP-55 form a 140 kDa complex via disulfide bonds in the plasma. In terms of processing, the N-terminus is blocked. As to expression, plasma; synthesized in the liver.

It localises to the secreted. Functionally, protease inhibitor. The polypeptide is Hibernation-specific plasma protein HP-55 (Tamias sibiricus (Siberian chipmunk)).